The sequence spans 344 residues: Putative F-box/kelch-repeat protein At1g19930 (344 aa).

In terms of domain architecture, F-box spans 8-54; sequence TELIFSLPNDLLVNILARVSRLDYPILSLVSKRFSSVLTLPELYQTR. Kelch repeat units lie at residues 122–168, 170–195, 196–241, and 243–276; these read NIYN…LLDG, IYVT…VDGK, LHSC…YYYY, and NENI…NVRL.

In Arabidopsis thaliana (Mouse-ear cress), this protein is Putative F-box/kelch-repeat protein At1g19930.